The following is a 562-amino-acid chain: Dihydroxy-acid dehydratase (562 aa).

A Mg(2+)-binding site is contributed by aspartate 80. A [2Fe-2S] cluster-binding site is contributed by cysteine 121. Positions 122 and 123 each coordinate Mg(2+). Lysine 123 is subject to N6-carboxylysine. Position 194 (cysteine 194) interacts with [2Fe-2S] cluster. Glutamate 446 provides a ligand contact to Mg(2+). Catalysis depends on serine 472, which acts as the Proton acceptor.

This sequence belongs to the IlvD/Edd family. As to quaternary structure, homodimer. It depends on [2Fe-2S] cluster as a cofactor. Mg(2+) is required as a cofactor.

It catalyses the reaction (2R)-2,3-dihydroxy-3-methylbutanoate = 3-methyl-2-oxobutanoate + H2O. It carries out the reaction (2R,3R)-2,3-dihydroxy-3-methylpentanoate = (S)-3-methyl-2-oxopentanoate + H2O. The protein operates within amino-acid biosynthesis; L-isoleucine biosynthesis; L-isoleucine from 2-oxobutanoate: step 3/4. It participates in amino-acid biosynthesis; L-valine biosynthesis; L-valine from pyruvate: step 3/4. Functionally, functions in the biosynthesis of branched-chain amino acids. Catalyzes the dehydration of (2R,3R)-2,3-dihydroxy-3-methylpentanoate (2,3-dihydroxy-3-methylvalerate) into 2-oxo-3-methylpentanoate (2-oxo-3-methylvalerate) and of (2R)-2,3-dihydroxy-3-methylbutanoate (2,3-dihydroxyisovalerate) into 2-oxo-3-methylbutanoate (2-oxoisovalerate), the penultimate precursor to L-isoleucine and L-valine, respectively. In Staphylococcus aureus (strain bovine RF122 / ET3-1), this protein is Dihydroxy-acid dehydratase.